A 463-amino-acid polypeptide reads, in one-letter code: Glycine--tRNA ligase (463 aa).

Residue Arg102 participates in substrate binding. Residues 113-134 (KHGHPPPNGLADIRDPDTGEPG) are disordered. Glu165 contributes to the substrate binding site. ATP is bound by residues 197-199 (RNE), 207-212 (FRTREF), 284-285 (EL), and 328-331 (GLTR). Residue 212–216 (FEQME) coordinates substrate. 324–328 (EPAAG) contacts substrate.

Belongs to the class-II aminoacyl-tRNA synthetase family. In terms of assembly, homodimer.

The protein resides in the cytoplasm. It carries out the reaction tRNA(Gly) + glycine + ATP = glycyl-tRNA(Gly) + AMP + diphosphate. Catalyzes the attachment of glycine to tRNA(Gly). This Mycolicibacterium paratuberculosis (strain ATCC BAA-968 / K-10) (Mycobacterium paratuberculosis) protein is Glycine--tRNA ligase.